Here is a 418-residue protein sequence, read N- to C-terminus: Deubiquitinase and deneddylase Dub1 (418 aa).

Residues 1-10 (MLSPTNSISK) show a composition bias toward polar residues. The segment at 1–23 (MLSPTNSISKTAPVPPQDSSKPV) is disordered. Residues 40-60 (TALAVLLVVVTLGLILLFYSF) traverse the membrane as a helical segment. Residues 72 to 144 (TRPSTKEQPT…PLPPKAPKPV (73 aa)) form a disordered region. Over residues 86–141 (VPLPSPPLAVPRPSTPPPPVISRPSTPPAPTPAISPPSTPSAPKPSTPPPLPPKAP) the composition is skewed to pro residues. Active-site residues include His288, Asp305, and Cys358.

This sequence belongs to the peptidase C48 family.

The protein localises to the secreted. Its subcellular location is the host cell. It localises to the membrane. Functionally, effector proteins function to alter host cell physiology and promote bacterial survival in host tissues. This protease possesses deubiquitinating and deneddylating activities. This is Deubiquitinase and deneddylase Dub1 (cdu1) from Chlamydia trachomatis serovar B (strain TZ1A828/OT).